The primary structure comprises 440 residues: 2-alpha-hydroxytaxane 2-O-benzoyltransferase (440 aa).

Catalysis depends on proton acceptor residues His158 and Asp367.

This sequence belongs to the plant acyltransferase family.

It catalyses the reaction 10-deacetyl-2-debenzoylbaccatin III + benzoyl-CoA = 10-deacetylbaccatin III + CoA. The protein operates within alkaloid biosynthesis; taxol biosynthesis; baccatin III from 10-deacetyl-2-debenzoylbaccatin III: step 1/2. Catalyzes the conversion of 2-debenzoyl-7,13-diacetylbaccatin III, a semisynthetic substrate, to 7,13-diacetylbaccatin III. The sequence is that of 2-alpha-hydroxytaxane 2-O-benzoyltransferase from Taxus cuspidata (Japanese yew).